A 176-amino-acid polypeptide reads, in one-letter code: PRL-1 phosphatase (176 aa).

Residues 13 to 166 form the Tyrosine-protein phosphatase domain; the sequence is APALIEYKGM…YKPKARLKHK (154 aa). Residue Cys109 is the Phosphocysteine intermediate of the active site. Cys173 is subject to Cysteine methyl ester. Cys173 is lipidated: S-farnesyl cysteine. The propeptide at 174–176 is removed in mature form; it reads SVQ.

It belongs to the protein-tyrosine phosphatase family. Homotrimer. Interacts with uex, possibly at the plasma membrane. As to expression, expressed in the adult head (at protein level). Expressed in neurons in the antennal lobe and V-glomeruli (at protein level). Expressed in dorsocentral neurons (at protein level).

It is found in the cytoplasm. It localises to the cell membrane. The protein localises to the apicolateral cell membrane. The protein resides in the cell projection. Its subcellular location is the axon. The enzyme catalyses O-phospho-L-tyrosyl-[protein] + H2O = L-tyrosyl-[protein] + phosphate. Functionally, probable phosphatase. Inhibits growth possibly by negatively regulating Src64B-induced growth. Regulates central nervous system circuit formation and stabilization of synapse-dense terminal arbors. In dorsocentral neurons, regulates synaptogenesis in terminal arbors via modulation of the insulin receptor pathway, likely upstream of Akt1, and via reduction of PtdIns(4,5)P2 (Phosphatidylinositol 4,5-bisphosphate) levels. In the nervous system, plays a protective role together with uex in response to olfactory carbon dioxide stimulation. The protein is PRL-1 phosphatase of Drosophila melanogaster (Fruit fly).